The chain runs to 308 residues: Formamidopyrimidine-DNA glycosylase (308 aa).

The active-site Schiff-base intermediate with DNA is P2. Residue E3 is the Proton donor of the active site. Catalysis depends on K61, which acts as the Proton donor; for beta-elimination activity. DNA-binding residues include H100, R120, and R181. The FPG-type zinc finger occupies 267 to 301; sequence AVYGQEGRPCPRCGALVRRDAFMNRSSFSCPVCQP. The active-site Proton donor; for delta-elimination activity is the R291.

This sequence belongs to the FPG family. Monomer. The cofactor is Zn(2+).

It catalyses the reaction Hydrolysis of DNA containing ring-opened 7-methylguanine residues, releasing 2,6-diamino-4-hydroxy-5-(N-methyl)formamidopyrimidine.. It carries out the reaction 2'-deoxyribonucleotide-(2'-deoxyribose 5'-phosphate)-2'-deoxyribonucleotide-DNA = a 3'-end 2'-deoxyribonucleotide-(2,3-dehydro-2,3-deoxyribose 5'-phosphate)-DNA + a 5'-end 5'-phospho-2'-deoxyribonucleoside-DNA + H(+). Its function is as follows. Involved in base excision repair of DNA damaged by oxidation or by mutagenic agents. Acts as a DNA glycosylase that recognizes and removes damaged bases. Has a preference for oxidized purines, such as 7,8-dihydro-8-oxoguanine (8-oxoG). Has AP (apurinic/apyrimidinic) lyase activity and introduces nicks in the DNA strand. Cleaves the DNA backbone by beta-delta elimination to generate a single-strand break at the site of the removed base with both 3'- and 5'-phosphates. This Kineococcus radiotolerans (strain ATCC BAA-149 / DSM 14245 / SRS30216) protein is Formamidopyrimidine-DNA glycosylase.